Consider the following 307-residue polypeptide: Urease accessory protein UreD (307 aa).

Belongs to the UreD family. UreD, UreF and UreG form a complex that acts as a GTP-hydrolysis-dependent molecular chaperone, activating the urease apoprotein by helping to assemble the nickel containing metallocenter of UreC. The UreE protein probably delivers the nickel.

It is found in the cytoplasm. Its function is as follows. Required for maturation of urease via the functional incorporation of the urease nickel metallocenter. The chain is Urease accessory protein UreD from Prochlorococcus marinus (strain NATL2A).